The following is a 340-amino-acid chain: Aldose 1-epimerase (340 aa).

Position 77 (arginine 77) interacts with substrate. The active-site Proton donor is histidine 172. Aspartate 243 serves as a coordination point for substrate. The active-site Proton acceptor is glutamate 305.

It belongs to the aldose epimerase family.

It is found in the cytoplasm. It catalyses the reaction alpha-D-glucose = beta-D-glucose. The protein operates within carbohydrate metabolism; hexose metabolism. Its function is as follows. Mutarotase converts alpha-aldose to the beta-anomer. It is active on D-glucose, L-arabinose, D-xylose, D-galactose, maltose and lactose. This chain is Aldose 1-epimerase (galM), found in Haemophilus influenzae (strain ATCC 51907 / DSM 11121 / KW20 / Rd).